A 267-amino-acid polypeptide reads, in one-letter code: Interleukin-1 alpha (267 aa).

Positions 1-112 are excised as a propeptide; sequence MAKVPDLFED…DPEEGIIKPR (112 aa). N-linked (GlcNAc...) asparagine glycosylation is present at asparagine 64. Lysine 82 carries the post-translational modification N6-acetyllysine. The nuclear localization signal (NLS) stretch occupies residues 82-86; sequence KKRRL. Serine 87 is subject to Phosphoserine. Residues asparagine 100 and asparagine 141 are each glycosylated (N-linked (GlcNAc...) asparagine).

Belongs to the IL-1 family. In terms of assembly, monomer. Interacts with TMED10; the interaction mediates the translocation from the cytoplasm into the ERGIC (endoplasmic reticulum-Golgi intermediate compartment) and thereby secretion. Interacts with IL1R1. Interacts with S100A13; this interaction is the first step in the export of IL1A, followed by direct translocation of this complex across the plasma membrane. Acetylated within its nuclear localization sequence, which impacts subcellular localization. Post-translationally, proteolytic processed by CAPN1 in a calcium-dependent manner. Cleavage from 31 kDa precursor to 18 kDa biologically active molecules. In terms of processing, phosphorylated. Phosphorylation greatly enhances susceptibility to digestion and promotes the conversion of pre-IL1A alpha to the biologically active IL1A.

The protein resides in the nucleus. The protein localises to the cytoplasm. It is found in the secreted. Functionally, cytokine constitutively present intracellularly in nearly all resting non-hematopoietic cells that plays an important role in inflammation and bridges the innate and adaptive immune systems. After binding to its receptor IL1R1 together with its accessory protein IL1RAP, forms the high affinity interleukin-1 receptor complex. Signaling involves the recruitment of adapter molecules such as MYD88, IRAK1 or IRAK4. In turn, mediates the activation of NF-kappa-B and the three MAPK pathways p38, p42/p44 and JNK pathways. Within the cell, acts as an alarmin and cell death results in its liberation in the extracellular space after disruption of the cell membrane to induce inflammation and alert the host to injury or damage. In addition to its role as a danger signal, which occurs when the cytokine is passively released by cell necrosis, directly senses DNA damage and acts as signal for genotoxic stress without loss of cell integrity. In Oryctolagus cuniculus (Rabbit), this protein is Interleukin-1 alpha (IL1A).